We begin with the raw amino-acid sequence, 550 residues long: Nucleoside hydrolase 4 (550 aa).

This sequence belongs to the IUNH family.

The protein localises to the cytoplasm. Its function is as follows. May be involved in the degradation of nucleosides. This chain is Nucleoside hydrolase 4, found in Arabidopsis thaliana (Mouse-ear cress).